The chain runs to 649 residues: Acetyl-coenzyme A synthetase (649 aa).

Residues 191-194 (RAGR), Thr-311, and Asn-335 contribute to the CoA site. Residues 387 to 389 (GEP), 411 to 416 (DTWWQT), Asp-500, and Arg-515 each bind ATP. Ser-523 provides a ligand contact to CoA. Arg-526 is an ATP binding site. Residues Val-537, Phe-539, and Ile-542 each coordinate Mg(2+). Arg-584 serves as a coordination point for CoA. Lys-609 is subject to N6-acetyllysine.

The protein belongs to the ATP-dependent AMP-binding enzyme family. Mg(2+) is required as a cofactor. Post-translationally, acetylated. Deacetylation by the SIR2-homolog deacetylase activates the enzyme.

The enzyme catalyses acetate + ATP + CoA = acetyl-CoA + AMP + diphosphate. Catalyzes the conversion of acetate into acetyl-CoA (AcCoA), an essential intermediate at the junction of anabolic and catabolic pathways. AcsA undergoes a two-step reaction. In the first half reaction, AcsA combines acetate with ATP to form acetyl-adenylate (AcAMP) intermediate. In the second half reaction, it can then transfer the acetyl group from AcAMP to the sulfhydryl group of CoA, forming the product AcCoA. The sequence is that of Acetyl-coenzyme A synthetase from Photobacterium profundum (strain SS9).